The primary structure comprises 955 residues: RNA polymerase-associated protein RapA (955 aa).

Residues 163–333 enclose the Helicase ATP-binding domain; that stretch reads EVGHRYAPRV…FARLRLLDPE (171 aa). Residue 176–183 coordinates ATP; the sequence is DEVGLGKT. A DEAH box motif is present at residues 279 to 282; that stretch reads DEAH. Residues 478-642 form the Helicase C-terminal domain; that stretch reads RVEWLLELLL…AVRDELFELL (165 aa).

It belongs to the SNF2/RAD54 helicase family. RapA subfamily. Interacts with the RNAP. Has a higher affinity for the core RNAP than for the holoenzyme. Its ATPase activity is stimulated by binding to RNAP.

Its function is as follows. Transcription regulator that activates transcription by stimulating RNA polymerase (RNAP) recycling in case of stress conditions such as supercoiled DNA or high salt concentrations. Probably acts by releasing the RNAP, when it is trapped or immobilized on tightly supercoiled DNA. Does not activate transcription on linear DNA. Probably not involved in DNA repair. This Aeromonas hydrophila subsp. hydrophila (strain ATCC 7966 / DSM 30187 / BCRC 13018 / CCUG 14551 / JCM 1027 / KCTC 2358 / NCIMB 9240 / NCTC 8049) protein is RNA polymerase-associated protein RapA.